The following is a 305-amino-acid chain: Cyclin-dependent kinase 3 (305 aa).

Residues 4–286 (FQKVEKIGEG…AKTALAHPYF (283 aa)) enclose the Protein kinase domain. ATP contacts are provided by residues 10–18 (IGEGTYGVV) and Lys-33. The active-site Proton acceptor is Asp-127.

The protein belongs to the protein kinase superfamily. CMGC Ser/Thr protein kinase family. CDC2/CDKX subfamily. As to quaternary structure, interacts with CABLES1 and CABLES2. Interacts with ATF1. Binding to CCNC/cyclin-C promotes RB1 phosphorylation. In terms of tissue distribution, expressed in cancer cell lines and glioblastoma tissue.

It carries out the reaction L-seryl-[protein] + ATP = O-phospho-L-seryl-[protein] + ADP + H(+). The catalysed reaction is L-threonyl-[protein] + ATP = O-phospho-L-threonyl-[protein] + ADP + H(+). Functionally, serine/threonine-protein kinase that plays a critical role in the control of the eukaryotic cell cycle; involved in G0-G1 and G1-S cell cycle transitions. Interacts with CCNC/cyclin-C during interphase. Phosphorylates histone H1, ATF1, RB1 and CABLES1. ATF1 phosphorylation triggers ATF1 transactivation and transcriptional activities, and promotes cell proliferation and transformation. CDK3/cyclin-C mediated RB1 phosphorylation is required for G0-G1 transition. Promotes G1-S transition probably by contributing to the activation of E2F1, E2F2 and E2F3 in a RB1-independent manner. The chain is Cyclin-dependent kinase 3 (CDK3) from Homo sapiens (Human).